We begin with the raw amino-acid sequence, 396 residues long: MTTNTVSRKVAWLRVVTLAVAAFIFNTTEFVPVGLLSDIAQSFHMQTAQVGIMLTIYAWVVALMSLPFMLMTSQVERRKLLICLFVVFIASHVLSFLSWSFTVLVISRIGVAFAHAIFWSITASLAIRMAPAGKRAQALSLIATGTALAMVLGLPLGRIVGQYFGWRMTFFAIGIGALITLLCLIKLLPLLPSEHSGSLKSLPLLFRRPALMSIYLLTVVVVTAHYTAYSYIEPFVQNIAGFSANFATALLLLLGGAGIIGSVIFGKLGNQYASALVSTAIALLLVCLALLLPAANSEIHLGVLSIFWGIAMMLIGLGMQVKVLALAPDATDVAMALFSGIFNIGIGAGALVGNQVSLHWSMSMIGYVGAVPAFAALIWSIIIFRRWPVTLEEQTQ.

A run of 12 helical transmembrane segments spans residues 15–35 (VVTL…PVGL), 50–70 (VGIM…PFML), 81–101 (LICL…SWSF), 103–123 (VLVI…SITA), 136–156 (AQAL…GLPL), 170–190 (FFAI…LLPL), 209–229 (PALM…YTAY), 246–266 (FATA…VIFG), 275–295 (ALVS…LPAA), 299–319 (IHLG…GLGM), 333–353 (VAMA…ALVG), and 364–384 (MIGY…IIIF).

Belongs to the major facilitator superfamily. SotB (TC 2.A.1.2) family.

It is found in the cell inner membrane. Functionally, involved in the efflux of sugars. The physiological role may be the reduction of the intracellular concentration of toxic sugars or sugar metabolites. In Shigella boydii serotype 18 (strain CDC 3083-94 / BS512), this protein is Probable sugar efflux transporter.